The chain runs to 449 residues: GPI mannosyltransferase 2 (449 aa).

Residues 1–7 (MTEKVTK) are Cytoplasmic-facing. Residues 8–28 (LALASRLIVLLVQLVANGALP) traverse the membrane as a helical segment. Topologically, residues 29–82 (EHKPDVFRMPVSSDQNASWIDKVIKRCLGGLRHWDGEYFLHIAENLYSYENTLA) are lumenal. N-linked (GlcNAc...) asparagine glycosylation occurs at asparagine 44. The helical transmembrane segment at 83 to 103 (FYPLYPVVVRHVGQAVEAIGI) threads the bilayer. At 104 to 109 (SLSQES) the chain is on the cytoplasmic side. Residues 110-130 (ILLVVAVALNFWLFCESANLL) traverse the membrane as a helical segment. Residues 131-148 (FQLTQVLFNDLNKSWNAA) lie on the Lumenal side of the membrane. Asparagine 142 is a glycosylation site (N-linked (GlcNAc...) asparagine). The chain crosses the membrane as a helical span at residues 149–169 (LIYCFNPATIFFTAAYSETFF). Topologically, residues 170–196 (AYSSLHLMLECSKPTGSFRYLRLGTAL) are cytoplasmic. A helical transmembrane segment spans residues 197 to 217 (AACLLCRSNGLITLGYPLYFF). Residues 218 to 235 (GRQLLLKNKEPNTCMQLT) are Lumenal-facing. A helical transmembrane segment spans residues 236–256 (QMTLTILGAIGILHTYYFYIY). The Cytoplasmic portion of the chain corresponds to 257-368 (RLYCLPNTRP…GFKELIRDHT (112 aa)). Residues 369–389 (TFPFVLHAAILTLVCTVYVHI) form a helical membrane-spanning segment. The Lumenal segment spans residues 390 to 423 (QVSTRLLASATPVFYWFAADHMPKTLAQLKLRSK). The chain crosses the membrane as a helical span at residues 424 to 444 (AGALFVWCTTYSLVGTVLFSN). The Cytoplasmic segment spans residues 445–449 (NYPWT).

Belongs to the PIGV family.

It localises to the endoplasmic reticulum membrane. It functions in the pathway glycolipid biosynthesis; glycosylphosphatidylinositol-anchor biosynthesis. Its function is as follows. Mannosyltransferase involved in glycosylphosphatidylinositol-anchor biosynthesis. Transfers the second mannose to the glycosylphosphatidylinositol during GPI precursor assembly. Required for the GPI-mediated endoplasmic reticulum exit and proper targeting to the cell surface of chp. Required for GPI-mediated membrane attachment of chp, qsm and Cont. Essential for microvillar stability in the rhabdomere. This Drosophila melanogaster (Fruit fly) protein is GPI mannosyltransferase 2.